A 103-amino-acid polypeptide reads, in one-letter code: c-Myc-binding protein (103 aa).

It belongs to the AMY1 family. In terms of assembly, binds via its C-terminal region to the N-terminal region of MYC. Associates with AKAP1/S-AKAP84. Interacts with MYCBPAP. Interacts with CFAP91.

It is found in the cytoplasm. It localises to the nucleus. Functionally, may control the transcriptional activity of MYC. Stimulates the activation of E box-dependent transcription by MYC. The polypeptide is c-Myc-binding protein (MYCBP) (Bos taurus (Bovine)).